A 126-amino-acid polypeptide reads, in one-letter code: Holo-[acyl-carrier-protein] synthase (126 aa).

2 residues coordinate Mg(2+): Asp-9 and Glu-58.

This sequence belongs to the P-Pant transferase superfamily. AcpS family. Mg(2+) is required as a cofactor.

The protein resides in the cytoplasm. The catalysed reaction is apo-[ACP] + CoA = holo-[ACP] + adenosine 3',5'-bisphosphate + H(+). In terms of biological role, transfers the 4'-phosphopantetheine moiety from coenzyme A to a Ser of acyl-carrier-protein. In Edwardsiella ictaluri (strain 93-146), this protein is Holo-[acyl-carrier-protein] synthase.